Consider the following 316-residue polypeptide: Carbamate kinase-like protein YahI (316 aa).

It belongs to the carbamate kinase family.

This chain is Carbamate kinase-like protein YahI (yahI), found in Escherichia coli (strain K12).